A 110-amino-acid polypeptide reads, in one-letter code: UPF0060 membrane protein SACE_5620 (110 aa).

The next 4 membrane-spanning stretches (helical) occupy residues 8 to 28, 34 to 54, 63 to 83, and 89 to 109; these read VVLFVLAAVAEIGGAWLVWQG, GLLWIGAGVIALGIYGFVATF, ILAAYGGVFVAGSLLWGVVVD, and RWDLIGATICLAGVAVIMYAP.

This sequence belongs to the UPF0060 family.

Its subcellular location is the cell membrane. This is UPF0060 membrane protein SACE_5620 from Saccharopolyspora erythraea (strain ATCC 11635 / DSM 40517 / JCM 4748 / NBRC 13426 / NCIMB 8594 / NRRL 2338).